We begin with the raw amino-acid sequence, 1174 residues long: Tyrosine-protein phosphatase non-receptor type 21 (1174 aa).

The FERM domain occupies 23 to 308 (LVARIQLLNN…ARHKFYRLNQ (286 aa)). Residues 396-423 (SAHSTNSLNNPQPYLQPSPMSSNPSITG) show a composition bias toward polar residues. Positions 396–445 (SAHSTNSLNNPQPYLQPSPMSSNPSITGSDVMRPDYLPSHRHSAVIPPSY) are disordered. Ser577, Ser589, Ser590, Ser637, and Ser673 each carry phosphoserine. Residues 673–692 (SQPSVFTERTQREGPEEAEG) are disordered. Positions 681–692 (RTQREGPEEAEG) are enriched in basic and acidic residues. 2 positions are modified to phosphoserine: Ser710 and Ser711. 2 disordered regions span residues 711 to 745 (SEEE…DPPG) and 769 to 806 (KRMM…TSGR). A compositionally biased stretch (acidic residues) spans 712–722 (EEEEDEDFEEE). Positions 796-805 (MSESDLTTSG) are enriched in polar residues. Ser797, Ser799, and Ser804 each carry phosphoserine. The 272-residue stretch at 896–1167 (VFTEYERILK…TFVYRVLIQF (272 aa)) folds into the Tyrosine-protein phosphatase domain. Substrate is bound by residues Glu1067, 1108–1114 (CSAGVGR), and Gln1152. Cys1108 acts as the Phosphocysteine intermediate in catalysis.

The protein belongs to the protein-tyrosine phosphatase family. Non-receptor class subfamily.

It is found in the cytoplasm. The protein localises to the cytoskeleton. It catalyses the reaction O-phospho-L-tyrosyl-[protein] + H2O = L-tyrosyl-[protein] + phosphate. This is Tyrosine-protein phosphatase non-receptor type 21 (PTPN21) from Homo sapiens (Human).